The sequence spans 71 residues: UPF0435 protein SE_1565 (71 aa).

The protein belongs to the UPF0435 family.

The protein is UPF0435 protein SE_1565 of Staphylococcus epidermidis (strain ATCC 12228 / FDA PCI 1200).